The chain runs to 745 residues: Phosphoribosylformylglycinamidine synthase subunit PurL (745 aa).

Residue histidine 47 is part of the active site. ATP contacts are provided by tyrosine 50 and lysine 90. Glutamate 92 lines the Mg(2+) pocket. Residues serine 93–histidine 96 and arginine 115 each bind substrate. Catalysis depends on histidine 94, which acts as the Proton acceptor. Aspartate 116 contributes to the Mg(2+) binding site. A substrate-binding site is contributed by glutamine 240. Aspartate 268 lines the Mg(2+) pocket. Glutamate 312–glutamine 314 is a substrate binding site. The ATP site is built by asparagine 501 and glycine 538. Residue asparagine 539 coordinates Mg(2+). Position 541 (serine 541) interacts with substrate.

It belongs to the FGAMS family. Monomer. Part of the FGAM synthase complex composed of 1 PurL, 1 PurQ and 2 PurS subunits.

The protein resides in the cytoplasm. It carries out the reaction N(2)-formyl-N(1)-(5-phospho-beta-D-ribosyl)glycinamide + L-glutamine + ATP + H2O = 2-formamido-N(1)-(5-O-phospho-beta-D-ribosyl)acetamidine + L-glutamate + ADP + phosphate + H(+). It participates in purine metabolism; IMP biosynthesis via de novo pathway; 5-amino-1-(5-phospho-D-ribosyl)imidazole from N(2)-formyl-N(1)-(5-phospho-D-ribosyl)glycinamide: step 1/2. Functionally, part of the phosphoribosylformylglycinamidine synthase complex involved in the purines biosynthetic pathway. Catalyzes the ATP-dependent conversion of formylglycinamide ribonucleotide (FGAR) and glutamine to yield formylglycinamidine ribonucleotide (FGAM) and glutamate. The FGAM synthase complex is composed of three subunits. PurQ produces an ammonia molecule by converting glutamine to glutamate. PurL transfers the ammonia molecule to FGAR to form FGAM in an ATP-dependent manner. PurS interacts with PurQ and PurL and is thought to assist in the transfer of the ammonia molecule from PurQ to PurL. This Leptospira interrogans serogroup Icterohaemorrhagiae serovar copenhageni (strain Fiocruz L1-130) protein is Phosphoribosylformylglycinamidine synthase subunit PurL.